Consider the following 228-residue polypeptide: Cytochrome c oxidase subunit 2 (228 aa).

At M1–H26 the chain is on the mitochondrial intermembrane side. A helical transmembrane segment spans residues A27–N48. Topologically, residues K49–E62 are mitochondrial matrix. Residues L63–R82 form a helical membrane-spanning segment. Residues L83–M228 lie on the Mitochondrial intermembrane side of the membrane. 6 residues coordinate Cu cation: H161, C196, E198, C200, H204, and M207. E198 contributes to the Mg(2+) binding site.

The protein belongs to the cytochrome c oxidase subunit 2 family. In terms of assembly, component of the cytochrome c oxidase (complex IV, CIV), a multisubunit enzyme composed of a catalytic core of 3 subunits and several supernumerary subunits. The complex exists as a monomer or a dimer and forms supercomplexes (SCs) in the inner mitochondrial membrane with ubiquinol-cytochrome c oxidoreductase (cytochrome b-c1 complex, complex III, CIII). The cofactor is Cu cation.

The protein localises to the mitochondrion inner membrane. It catalyses the reaction 4 Fe(II)-[cytochrome c] + O2 + 8 H(+)(in) = 4 Fe(III)-[cytochrome c] + 2 H2O + 4 H(+)(out). Its function is as follows. Component of the cytochrome c oxidase, the last enzyme in the mitochondrial electron transport chain which drives oxidative phosphorylation. The respiratory chain contains 3 multisubunit complexes succinate dehydrogenase (complex II, CII), ubiquinol-cytochrome c oxidoreductase (cytochrome b-c1 complex, complex III, CIII) and cytochrome c oxidase (complex IV, CIV), that cooperate to transfer electrons derived from NADH and succinate to molecular oxygen, creating an electrochemical gradient over the inner membrane that drives transmembrane transport and the ATP synthase. Cytochrome c oxidase is the component of the respiratory chain that catalyzes the reduction of oxygen to water. Electrons originating from reduced cytochrome c in the intermembrane space (IMS) are transferred via the dinuclear copper A center (CU(A)) of subunit 2 and heme A of subunit 1 to the active site in subunit 1, a binuclear center (BNC) formed by heme A3 and copper B (CU(B)). The BNC reduces molecular oxygen to 2 water molecules using 4 electrons from cytochrome c in the IMS and 4 protons from the mitochondrial matrix. In Periplaneta americana (American cockroach), this protein is Cytochrome c oxidase subunit 2 (COII).